We begin with the raw amino-acid sequence, 328 residues long: Extracellular exo-alpha-(1-&gt;5)-L-arabinofuranosidase (328 aa).

Residues 1–43 constitute a signal peptide (tat-tyPE signal); it reads MCTREAVRMSREHDLPEIPSRRLLLKGAAAAGALTAVPGVAHA. Asp-60 acts as the Proton acceptor in catalysis. Glu-236 (proton donor) is an active-site residue.

It belongs to the glycosyl hydrolase 43 family. Predicted to be exported by the Tat system. The position of the signal peptide cleavage has been experimentally proven.

It localises to the secreted. The enzyme catalyses Hydrolysis of terminal non-reducing alpha-L-arabinofuranoside residues in alpha-L-arabinosides.. Its pathway is glycan metabolism; L-arabinan degradation. In terms of biological role, involved in the degradation of arabinan and is a key enzyme in the complete degradation of the plant cell wall. Catalyzes only the cleavage of terminal alpha-(1-&gt;5) arabinofuranosyl bonds of arabinan present in the arabinofuranosyl polysaccharides or oligosaccharides. It cannot act on other arabinose-containing polysaccharides and arabinoxylo-oligosaccharides. The protein is Extracellular exo-alpha-(1-&gt;5)-L-arabinofuranosidase of Streptomyces chartreusis.